Here is a 466-residue protein sequence, read N- to C-terminus: Asparagine--tRNA ligase (466 aa).

It belongs to the class-II aminoacyl-tRNA synthetase family. In terms of assembly, homodimer.

It is found in the cytoplasm. The enzyme catalyses tRNA(Asn) + L-asparagine + ATP = L-asparaginyl-tRNA(Asn) + AMP + diphosphate + H(+). The protein is Asparagine--tRNA ligase of Aeromonas hydrophila subsp. hydrophila (strain ATCC 7966 / DSM 30187 / BCRC 13018 / CCUG 14551 / JCM 1027 / KCTC 2358 / NCIMB 9240 / NCTC 8049).